We begin with the raw amino-acid sequence, 120 residues long: Large ribosomal subunit protein bL17 (120 aa).

The protein belongs to the bacterial ribosomal protein bL17 family. Part of the 50S ribosomal subunit. Contacts protein L32.

The protein is Large ribosomal subunit protein bL17 of Shouchella clausii (strain KSM-K16) (Alkalihalobacillus clausii).